The primary structure comprises 189 residues: Potassium-transporting ATPase KdpC subunit (189 aa).

A helical membrane pass occupies residues 10-30; it reads VIFAMLTLICGVIYPYAITGI.

It belongs to the KdpC family. The system is composed of three essential subunits: KdpA, KdpB and KdpC.

The protein localises to the cell inner membrane. In terms of biological role, part of the high-affinity ATP-driven potassium transport (or Kdp) system, which catalyzes the hydrolysis of ATP coupled with the electrogenic transport of potassium into the cytoplasm. This subunit acts as a catalytic chaperone that increases the ATP-binding affinity of the ATP-hydrolyzing subunit KdpB by the formation of a transient KdpB/KdpC/ATP ternary complex. The sequence is that of Potassium-transporting ATPase KdpC subunit from Janthinobacterium sp. (strain Marseille) (Minibacterium massiliensis).